The chain runs to 150 residues: D-galactose-binding lectin (150 aa).

Residues H16 and G19 each contribute to the D-galactose site. An N-linked (GlcNAc...) asparagine glycan is attached at N26. Residues 35 to 37 (DIH), H64, and G67 contribute to the D-galactose site. An N-linked (GlcNAc...) asparagine glycan is attached at N74. D-galactose is bound by residues 83-85 (DRH), H108, and G111. N118 carries N-linked (GlcNAc...) asparagine glycosylation. 127–129 (DEH) is a binding site for D-galactose.

Oligomerizes in solution. In terms of processing, the N-terminus is blocked. In terms of tissue distribution, expressed in mantle. Expressed 51 and 1.6 fold in mantle and gonads, respectively, relative to that in hemocytes. Expressed at a much lower level in other tissues tested including gill, muscle and hepatopancreas.

With respect to regulation, hemagglutinating activity does not require Ca(2+) ions. Hemagglutinating activity is inhibited by porcine stomach mucin (PSM), bovine submaxillary mucin (BSM) and fetuin. Agglutination of V.proteolyticus bacteria is inhibited by D-galactose, but not by D-glucose. Fungal binding is inhibited by D-galactose, but not by pathogen-associated molecular patterns (PAMPs) including lipopolysaccharide (LPS), peptidoglycan and beta-glucan. D-galactose-binding lectin. Binds both alpha and beta anomer of galactose (Gal). Binds strongly to branched beta-Gal-terminated glycans and weakly to unbranched glycans with alpha-Gal on the end of chains. Has strong affinity for both Gal and GalNAc. Binds glycoproteins containing mucin-type chains. Has hemagglutinating activity towards human group A erythrocytes. Has hemagglutinating activity towards rabbit erythrocytes. Agglutinates V.proteolyticus bacteria. Binds strongly to fungi including species from genera Aspergillus, Alternaria, Fusarium and Haematonectria, and to a lesser extent to fungi from genera Trichoderma. Decreases conidia germination and hyphal growth of fungi. At high concentration, stimulates secretion of cytokines TNF-alpha and IFN-gamma from human peripheral blood cells, and at low concentration reduces hyperexpression of cytokine IL-10 in these cells, indicative of immunomodulatory capability. However, has no effect on IL-4 production. Recognizes pathogen-associated molecular patterns (PAMPs) and binds to peptidoglycan from S.aureus, but has only little binding to beta-1,3-glucan from E.gracilis and lipopolysaccharide (LPS) from E.coli. May be involved in innate immunity acting as an antibacterial or antifungal agent recognizing carbohydrate ligands on the surface of pathogens. The protein is D-galactose-binding lectin of Mytilus trossulus (Blue mussel).